The sequence spans 243 residues: Ubiquinone/menaquinone biosynthesis C-methyltransferase UbiE (243 aa).

S-adenosyl-L-methionine contacts are provided by residues Thr-69, Asp-90, and 116-117; that span reads DA.

Belongs to the class I-like SAM-binding methyltransferase superfamily. MenG/UbiE family.

It catalyses the reaction a 2-demethylmenaquinol + S-adenosyl-L-methionine = a menaquinol + S-adenosyl-L-homocysteine + H(+). It carries out the reaction a 2-methoxy-6-(all-trans-polyprenyl)benzene-1,4-diol + S-adenosyl-L-methionine = a 5-methoxy-2-methyl-3-(all-trans-polyprenyl)benzene-1,4-diol + S-adenosyl-L-homocysteine + H(+). The protein operates within quinol/quinone metabolism; menaquinone biosynthesis; menaquinol from 1,4-dihydroxy-2-naphthoate: step 2/2. It functions in the pathway cofactor biosynthesis; ubiquinone biosynthesis. Methyltransferase required for the conversion of demethylmenaquinol (DMKH2) to menaquinol (MKH2) and the conversion of 2-polyprenyl-6-methoxy-1,4-benzoquinol (DDMQH2) to 2-polyprenyl-3-methyl-6-methoxy-1,4-benzoquinol (DMQH2). In Burkholderia multivorans (strain ATCC 17616 / 249), this protein is Ubiquinone/menaquinone biosynthesis C-methyltransferase UbiE.